Here is a 798-residue protein sequence, read N- to C-terminus: Putative antiporter subunit mnhA2 (798 aa).

21 consecutive transmembrane segments (helical) span residues 1 to 21 (MSLVYLLSTLILIMVILLFTL), 33 to 53 (IALLAPIVASVYFLYQLPSVM), 78 to 98 (GLSLFFSLLISLIGLAVVYYA), 109 to 129 (LPRFYVYLLLFMFSMLGIVTA), 133 to 153 (ILMYVFWELTSVSSFLLIVYW), 167 to 187 (FMITVFGGLALLAGFIMIYIV), 209 to 229 (FIPIIILLLLGAFTKSAQFPF), 241 to 261 (TPVSAYLHSATMVKAGIFLLF), 272 to 292 (FYIYSVTFVGLITMIFGAVNA), 300 to 320 (AILAYSTISQLGMIVSMVGLG), 337 to 357 (MILFAALFHLMNHALYKGALF), 381 to 401 (VFPITHIVMLLSALSMAGIPF), 431 to 451 (IITVIGVIASIFTLVYGVYMI), 472 to 492 (PFLFTLPSAIMMILLPVIFFI), 526 to 546 (GFNLPLILSLIVIVVGFIMAL), 593 to 613 (ITITLLIFSMVVIYGMIQAGF), 625 to 645 (GPIEVITLIVVFVLGIALTFI), 649 to 669 (LTMVVLNGIIGYCVTIFFILM), 674 to 694 (LALTQLVVETITTILFIVSFS), 710 to 730 (AVKIIVSLLMAVIVVTLVFIA), and 766 to 786 (IDTLFEGMVLIIAGLGIYTLL).

It belongs to the CPA3 antiporters (TC 2.A.63) subunit A family. In terms of assembly, may form a heterooligomeric complex that consists of seven subunits: mnhA2, mnhB2, mnhC2, mnhD2, mnhE2, mnhF2 and mnhG2.

Its subcellular location is the cell membrane. In Staphylococcus saprophyticus subsp. saprophyticus (strain ATCC 15305 / DSM 20229 / NCIMB 8711 / NCTC 7292 / S-41), this protein is Putative antiporter subunit mnhA2 (mnhA2).